The sequence spans 179 residues: Cell division protein ZapC (179 aa).

It belongs to the ZapC family. As to quaternary structure, interacts directly with FtsZ.

It is found in the cytoplasm. Functionally, contributes to the efficiency of the cell division process by stabilizing the polymeric form of the cell division protein FtsZ. Acts by promoting interactions between FtsZ protofilaments and suppressing the GTPase activity of FtsZ. This is Cell division protein ZapC from Ferrimonas balearica (strain DSM 9799 / CCM 4581 / KCTC 23876 / PAT).